Reading from the N-terminus, the 190-residue chain is Molybdenum cofactor guanylyltransferase (190 aa).

GTP is bound by residues 10-12 (LAG), K23, N51, D69, and D99. D99 serves as a coordination point for Mg(2+).

This sequence belongs to the MobA family. Monomer. Mg(2+) is required as a cofactor.

The protein resides in the cytoplasm. The enzyme catalyses Mo-molybdopterin + GTP + H(+) = Mo-molybdopterin guanine dinucleotide + diphosphate. Functionally, transfers a GMP moiety from GTP to Mo-molybdopterin (Mo-MPT) cofactor (Moco or molybdenum cofactor) to form Mo-molybdopterin guanine dinucleotide (Mo-MGD) cofactor. The chain is Molybdenum cofactor guanylyltransferase from Mannheimia succiniciproducens (strain KCTC 0769BP / MBEL55E).